Reading from the N-terminus, the 234-residue chain is Uridylate kinase (234 aa).

9–10 (GS) lines the ATP pocket. UMP is bound at residue glycine 43. The ATP site is built by glycine 44 and arginine 48. Residues aspartate 65 and 113–119 (VIPGQTT) contribute to the UMP site. ATP is bound by residues threonine 139, tyrosine 145, and aspartate 148.

It belongs to the UMP kinase family. Homohexamer.

Its subcellular location is the cytoplasm. The catalysed reaction is UMP + ATP = UDP + ADP. It participates in pyrimidine metabolism; CTP biosynthesis via de novo pathway; UDP from UMP (UMPK route): step 1/1. With respect to regulation, inhibited by UTP. Functionally, catalyzes the reversible phosphorylation of UMP to UDP. The chain is Uridylate kinase from Methanococcoides burtonii (strain DSM 6242 / NBRC 107633 / OCM 468 / ACE-M).